We begin with the raw amino-acid sequence, 782 residues long: DNA repair and recombination protein RAD54-like (782 aa).

Polar residues predominate over residues 1-20 (MRRSLAPSQRGGQRLSSRND). A disordered region spans residues 1-28 (MRRSLAPSQRGGQRLSSRNDFTPPLLKK). A required for chromatin remodeling, strand pairing activities and coupling of ATPase activity region spans residues 2–9 (RRSLAPSQ). The residue at position 22 (T22) is a Phosphothreonine. Residues 168–343 (EGKRGNFNGC…FSLVNFVNPE (176 aa)) form the Helicase ATP-binding domain. ATP is bound at residue 181 to 188 (DEMGLGKT). Positions 294 to 297 (DEGH) match the DEGH box motif. The Helicase C-terminal domain occupies 501–658 (LLDFMLAAIR…NNESAEKHFT (158 aa)). Residues 741–753 (SQKIETTPATETS) are compositionally biased toward polar residues. Residues 741 to 782 (SQKIETTPATETSVEAKPEPERRKRPAMPLSDDSADEDFQGF) are disordered. Over residues 773 to 782 (DSADEDFQGF) the composition is skewed to acidic residues.

This sequence belongs to the SNF2/RAD54 helicase family. As to quaternary structure, interacts (via N-terminus) with spn-A/Rad51.

Its subcellular location is the nucleus. Functionally, involved in mitotic DNA repair and meiotic recombination. Functions in the recombinational DNA repair pathway. Essential for interhomolog gene conversion (GC), but may have a less important role in intersister GC than spn-A/Rad51. In the presence of DNA, spn-A/Rad51 enhances the ATPase activity of okr/Rad54. The protein is DNA repair and recombination protein RAD54-like of Drosophila pseudoobscura pseudoobscura (Fruit fly).